Reading from the N-terminus, the 297-residue chain is 3-mercaptopyruvate sulfurtransferase (297 aa).

A2 carries the N-acetylalanine modification. A Rhodanese 1 domain is found at 25–144; the sequence is SSQPLKLLDA…WLNQNLPISS (120 aa). S35 bears the Phosphoserine mark. Residue K40 is modified to N6-acetyllysine; alternate. K40 carries the N6-succinyllysine; alternate modification. Residues 145–160 are hinge; sequence GKSHSEPAEFSAQLDP. K146 and K164 each carry N6-succinyllysine. The Rhodanese 2 domain occupies 174-288; sequence DARRFQVVDA…WYMRAQPEHI (115 aa). Residue R188 coordinates substrate. Residue C248 is the Cysteine persulfide intermediate of the active site.

As to quaternary structure, monomer (active form). Homodimer; disulfide-linked (inactive form). Expressed in the brain and retina. In the retina, localized to the inner and outer plexiform layer, the inner and outer nuclear layer and the outer segments of photoreceptors. In the brain, localized to neurons of mitral cell layers, glomerular, and external plexiform layers in the olfactory bulb. Also found in Purkinje cell stomata and proximal dendrites. In the spinal cord, localized to large neurons. In the cerebral cortex, localized to pyramidial neurons in layers II/III and V, and in layers I-VI of neocortical areas. In the hippocampus, found in CA1 and CA3 pyramidal cells.

Its subcellular location is the cytoplasm. The protein resides in the mitochondrion. It localises to the synapse. It is found in the synaptosome. It carries out the reaction 2-oxo-3-sulfanylpropanoate + [thioredoxin]-dithiol = [thioredoxin]-disulfide + hydrogen sulfide + pyruvate + H(+). By oxidative stress, and thioredoxin. Under oxidative stress conditions, the catalytic cysteine site is converted to a sulfenate which inhibits the MPST enzyme activity. Reduced thioredoxin cleaves an intersubunit disulfide bond to turn on the redox switch and reactivate the enzyme. Inhibited by different oxidants, hydrogen peroxide and tetrathionate. In terms of biological role, transfer of a sulfur ion to cyanide or to other thiol compounds. Also has weak rhodanese activity. Detoxifies cyanide and is required for thiosulfate biosynthesis. Acts as an antioxidant. In combination with cysteine aminotransferase (CAT), contributes to the catabolism of cysteine and is an important producer of hydrogen sulfide in the brain, retina and vascular endothelial cells. Hydrogen sulfide H(2)S is an important synaptic modulator, signaling molecule, smooth muscle contractor and neuroprotectant. Its production by the 3MST/CAT pathway is regulated by calcium ions. The protein is 3-mercaptopyruvate sulfurtransferase (Mpst) of Mus musculus (Mouse).